Here is a 92-residue protein sequence, read N- to C-terminus: Neuropeptide F (92 aa).

An N-terminal signal peptide occupies residues 1–27 (MSQSRPLALLVVAALVAAAVLVAAAEA). Positions 28–51 (QQADGNKLEGLADALKYLQELDRY) are excised as a propeptide. Phenylalanine 60 carries the post-translational modification Phenylalanine amide. A propeptide spanning residues 64 to 92 (AELRPDVVDDVIPEEMSADKFWRRFARRR) is cleaved from the precursor.

This sequence belongs to the NPY family. Widely expressed in the nervous system. Expressed in corpora cardiaca, hypocerebral ganglion, frontal ganglion, protocerebrum, antennal lobe, tritocerebrum and thoracic ganglia. Not detected in corpora allata, pars intercerebralis, circumesophageal connectives, subesophageal ganglion, abdominal ganglion and abdominal perisympathetic organs.

Its subcellular location is the secreted. Accelerates ovarian maturation in females. In Locusta migratoria (Migratory locust), this protein is Neuropeptide F.